A 472-amino-acid chain; its full sequence is Serine/threonine-protein kinase ULK3 (472 aa).

The 257-residue stretch at phenylalanine 14–valine 270 folds into the Protein kinase domain. Residues leucine 20–valine 28 and lysine 44 contribute to the ATP site. The active-site Proton acceptor is aspartate 137. At serine 176 the chain carries Phosphoserine. The MIT 1 domain occupies serine 280–valine 348. Phosphoserine; by autocatalysis is present on residues serine 300, serine 350, serine 384, and serine 464. Residues arginine 375 to valine 444 enclose the MIT 2 domain.

Belongs to the protein kinase superfamily. Ser/Thr protein kinase family. APG1/unc-51/ULK1 subfamily. As to quaternary structure, interacts (via protein kinase domain) with SUFU. In terms of processing, autophosphorylated. Autophosphorylation is blocked by interaction with SUFU. Widely expressed. Highest levels observed in fetal brain. In adult tissues, high levels in brain, liver and kidney, moderate levels in testis and adrenal gland and low levels in heart, lung, stomach, thymus, prostate and placenta. In the brain, highest expression in the hippocampus, high levels also detected in the cerebellum, olfactory bulb and optic nerve. In the central nervous system, lowest levels in the spinal cord.

It is found in the cytoplasm. It carries out the reaction L-seryl-[protein] + ATP = O-phospho-L-seryl-[protein] + ADP + H(+). The enzyme catalyses L-threonyl-[protein] + ATP = O-phospho-L-threonyl-[protein] + ADP + H(+). Its function is as follows. Serine/threonine protein kinase that acts as a regulator of Sonic hedgehog (SHH) signaling and autophagy. Acts as a negative regulator of SHH signaling in the absence of SHH ligand: interacts with SUFU, thereby inactivating the protein kinase activity and preventing phosphorylation of GLI proteins (GLI1, GLI2 and/or GLI3). Positively regulates SHH signaling in the presence of SHH: dissociates from SUFU, autophosphorylates and mediates phosphorylation of GLI2, activating it and promoting its nuclear translocation. Phosphorylates in vitro GLI2, as well as GLI1 and GLI3, although less efficiently. Also acts as a regulator of autophagy: following cellular senescence, able to induce autophagy. The sequence is that of Serine/threonine-protein kinase ULK3 (ULK3) from Homo sapiens (Human).